Consider the following 436-residue polypeptide: MPDERTTGREGVGAAVLAAGFGERLRECGRPKPLARVAGLTLLERTVRTLRAGGLEGEIVVVVGHRGEEVAGHCKARGLPVRVVENPDYPRGNGTSVLAAMRFLPERFVVAMVDHIHTPESVRRLLRCEGDFVAAVDTRPVYADPGEATRVRLEGGRVVEFGKNLPRYDGLDAGLFLCSRPALERLREASGGERLSWNDLKRAWLASGGEVVACDLAGAPWTDVDTPQDLRLSEEMVLGWAASGNDGPVSRHINRRISRRITRRLLDTPLSPDQVSLLSFALAALGAGLLAAGRLRLGGALVQLASIVDGCDGELARARLESSPRGAVFDATLDRWADALIISGLALGAGTRLAAAAGYPALAGALLVSYTRARWEAALGRMPSRFTGLGATRDVRLAVLALGGLLGAPGAALLATGALGNAEALRRLLALKRGRS.

Residues 11–241 (GVGAAVLAAG…LSEEMVLGWA (231 aa)) are mobA-like NTP transferase. Residues 17–19 (LAA) and Lys32 contribute to the CTP site. The tract at residues 242 to 435 (ASGNDGPVSR…RRLLALKRGR (194 aa)) is CDP-alcohol phosphatidyltransferases. 3 consecutive transmembrane segments (helical) span residues 275–295 (VSLL…AGRL), 349–371 (AGTR…VSYT), and 397–417 (LAVL…LATG).

The protein in the N-terminal section; belongs to the MobA family. It in the C-terminal section; belongs to the CDP-alcohol phosphatidyltransferase class-I family.

Its subcellular location is the membrane. It carries out the reaction 1D-myo-inositol 3-phosphate + CTP + H(+) = CDP-1L-myo-inositol + diphosphate. The catalysed reaction is CDP-1L-myo-inositol + 1D-myo-inositol 3-phosphate = bis(1L-myo-inositol) 3,1'-phosphate 1-phosphate + CMP + H(+). Involved in biosynthesis of di-myo-inositol phosphate (DIP), a widespread organic solute in microorganisms adapted to hot environments. Catalyzes the condensation of CTP and L-myo-inositol-1-phosphate into CDP-L-myo-inositol, as well as the biosynthesis of di-myo-inositol-1,3'-phosphate-1'-phosphate (DIPP) from CDP-L-myo-inositol and L-myo-inositol-1-phosphate. This is Bifunctional IPC transferase and DIPP synthase from Rubrobacter xylanophilus (strain DSM 9941 / JCM 11954 / NBRC 16129 / PRD-1).